We begin with the raw amino-acid sequence, 498 residues long: Glycerol kinase (498 aa).

Threonine 12 is a binding site for ADP. ATP-binding residues include threonine 12, threonine 13, and serine 14. Threonine 12 serves as a coordination point for sn-glycerol 3-phosphate. Arginine 16 provides a ligand contact to ADP. Residues arginine 82, glutamate 83, and tyrosine 134 each contribute to the sn-glycerol 3-phosphate site. The glycerol site is built by arginine 82, glutamate 83, and tyrosine 134. Histidine 230 carries the phosphohistidine; by HPr modification. Aspartate 244 provides a ligand contact to sn-glycerol 3-phosphate. Residues aspartate 244 and glutamine 245 each coordinate glycerol. The ADP site is built by threonine 266, glycine 309, glutamine 313, glycine 410, and asparagine 414. ATP is bound by residues threonine 266, glycine 309, glutamine 313, and glycine 410.

The protein belongs to the FGGY kinase family. In terms of assembly, homotetramer and homodimer (in equilibrium). The phosphoenolpyruvate-dependent sugar phosphotransferase system (PTS), including enzyme I, and histidine-containing protein (HPr) are required for the phosphorylation, which leads to the activation of the enzyme.

It carries out the reaction glycerol + ATP = sn-glycerol 3-phosphate + ADP + H(+). It functions in the pathway polyol metabolism; glycerol degradation via glycerol kinase pathway; sn-glycerol 3-phosphate from glycerol: step 1/1. Activated by phosphorylation and inhibited by fructose 1,6-bisphosphate (FBP). Its function is as follows. Key enzyme in the regulation of glycerol uptake and metabolism. Catalyzes the phosphorylation of glycerol to yield sn-glycerol 3-phosphate. The chain is Glycerol kinase from Staphylococcus aureus (strain COL).